Here is a 63-residue protein sequence, read N- to C-terminus: Large ribosomal subunit protein bL32 (63 aa).

It belongs to the bacterial ribosomal protein bL32 family.

In Aquifex aeolicus (strain VF5), this protein is Large ribosomal subunit protein bL32 (rpmF).